The sequence spans 383 residues: Lipid-A-disaccharide synthase (383 aa).

It belongs to the LpxB family.

It carries out the reaction 2-N,3-O-bis[(3R)-3-hydroxytetradecanoyl]-alpha-D-glucosaminyl 1-phosphate + UDP-2-N,3-O-bis[(3R)-3-hydroxytetradecanoyl]-alpha-D-glucosamine = lipid A disaccharide (E. coli) + UDP + H(+). It catalyses the reaction a lipid X + a UDP-2-N,3-O-bis[(3R)-3-hydroxyacyl]-alpha-D-glucosamine = a lipid A disaccharide + UDP + H(+). Its pathway is glycolipid biosynthesis; lipid IV(A) biosynthesis; lipid IV(A) from (3R)-3-hydroxytetradecanoyl-[acyl-carrier-protein] and UDP-N-acetyl-alpha-D-glucosamine: step 5/6. In terms of biological role, condensation of UDP-2,3-diacylglucosamine and 2,3-diacylglucosamine-1-phosphate to form lipid A disaccharide, a precursor of lipid A, a phosphorylated glycolipid that anchors the lipopolysaccharide to the outer membrane of the cell. This is Lipid-A-disaccharide synthase from Pectobacterium carotovorum subsp. carotovorum (strain PC1).